The primary structure comprises 94 residues: Integration host factor subunit beta (94 aa).

Belongs to the bacterial histone-like protein family. In terms of assembly, heterodimer of an alpha and a beta chain.

In terms of biological role, this protein is one of the two subunits of integration host factor, a specific DNA-binding protein that functions in genetic recombination as well as in transcriptional and translational control. The protein is Integration host factor subunit beta of Brucella anthropi (strain ATCC 49188 / DSM 6882 / CCUG 24695 / JCM 21032 / LMG 3331 / NBRC 15819 / NCTC 12168 / Alc 37) (Ochrobactrum anthropi).